The following is an 848-amino-acid chain: Coiled-coil domain-containing protein 110 (848 aa).

A disordered region spans residues 41–62; the sequence is SEGVKESGGNEPEYGCASEPEN. A coiled-coil region spans residues 442 to 794; it reads LQNYLKESLQ…LSDKVSSQNN (353 aa). At S620 the chain carries Phosphoserine.

It localises to the nucleus. In Mus musculus (Mouse), this protein is Coiled-coil domain-containing protein 110 (Ccdc110).